Reading from the N-terminus, the 239-residue chain is Ribosomal RNA small subunit methyltransferase G (239 aa).

S-adenosyl-L-methionine contacts are provided by residues Gly77, Phe82, 128–129 (AE), and Arg147.

This sequence belongs to the methyltransferase superfamily. RNA methyltransferase RsmG family.

It is found in the cytoplasm. Functionally, specifically methylates the N7 position of guanine in position 535 of 16S rRNA. This is Ribosomal RNA small subunit methyltransferase G from Bacillus cereus (strain AH187).